Consider the following 283-residue polypeptide: 2-dehydro-3-deoxyphosphooctonate aldolase (283 aa).

It belongs to the KdsA family.

The protein localises to the cytoplasm. It catalyses the reaction D-arabinose 5-phosphate + phosphoenolpyruvate + H2O = 3-deoxy-alpha-D-manno-2-octulosonate-8-phosphate + phosphate. Its pathway is carbohydrate biosynthesis; 3-deoxy-D-manno-octulosonate biosynthesis; 3-deoxy-D-manno-octulosonate from D-ribulose 5-phosphate: step 2/3. It participates in bacterial outer membrane biogenesis; lipopolysaccharide biosynthesis. The polypeptide is 2-dehydro-3-deoxyphosphooctonate aldolase (Vibrio parahaemolyticus serotype O3:K6 (strain RIMD 2210633)).